The following is a 218-amino-acid chain: uncharacterized protein (218 aa).

2 stretches are compositionally biased toward polar residues: residues 1–21 and 68–102; these read MSSQ…SSEF and LNTS…SSDI. Disordered stretches follow at residues 1–39, 63–116, and 170–205; these read MSSQ…RHAS, EKRL…STSG, and GAKR…GTPQ. The segment covering 183-195 has biased composition (basic and acidic residues); that stretch reads KRQEKQSPLESRH.

This is an uncharacterized protein from Caenorhabditis elegans.